Reading from the N-terminus, the 396-residue chain is S-adenosylmethionine synthase (396 aa).

Residue histidine 16 coordinates ATP. Aspartate 18 serves as a coordination point for Mg(2+). Position 44 (glutamate 44) interacts with K(+). L-methionine is bound by residues glutamate 57 and glutamine 100. The flexible loop stretch occupies residues 100–110 (QSVDIAQGVDR). Residues 165 to 167 (DAK), aspartate 240, 246 to 247 (RK), alanine 263, and lysine 267 each bind ATP. Aspartate 240 is a binding site for L-methionine. Lysine 271 is an L-methionine binding site.

It belongs to the AdoMet synthase family. As to quaternary structure, homotetramer; dimer of dimers. Mg(2+) serves as cofactor. The cofactor is K(+).

It localises to the cytoplasm. The catalysed reaction is L-methionine + ATP + H2O = S-adenosyl-L-methionine + phosphate + diphosphate. It functions in the pathway amino-acid biosynthesis; S-adenosyl-L-methionine biosynthesis; S-adenosyl-L-methionine from L-methionine: step 1/1. Functionally, catalyzes the formation of S-adenosylmethionine (AdoMet) from methionine and ATP. The overall synthetic reaction is composed of two sequential steps, AdoMet formation and the subsequent tripolyphosphate hydrolysis which occurs prior to release of AdoMet from the enzyme. The sequence is that of S-adenosylmethionine synthase from Pseudomonas syringae pv. tomato (strain ATCC BAA-871 / DC3000).